The primary structure comprises 261 residues: Na(+)-translocating NADH-quinone reductase subunit C (261 aa).

A helical transmembrane segment spans residues Leu-12–Gly-32. Thr-229 is modified (FMN phosphoryl threonine).

As to quaternary structure, composed of six subunits; NqrA, NqrB, NqrC, NqrD, NqrE and NqrF. FMN serves as cofactor.

The protein resides in the cell inner membrane. It carries out the reaction a ubiquinone + n Na(+)(in) + NADH + H(+) = a ubiquinol + n Na(+)(out) + NAD(+). In terms of biological role, NQR complex catalyzes the reduction of ubiquinone-1 to ubiquinol by two successive reactions, coupled with the transport of Na(+) ions from the cytoplasm to the periplasm. NqrA to NqrE are probably involved in the second step, the conversion of ubisemiquinone to ubiquinol. This chain is Na(+)-translocating NADH-quinone reductase subunit C, found in Vibrio campbellii (strain ATCC BAA-1116).